Here is a 74-residue protein sequence, read N- to C-terminus: uncharacterized protein (74 aa).

This is an uncharacterized protein from Dictyostelium discoideum (Social amoeba).